We begin with the raw amino-acid sequence, 1272 residues long: Protein diaphanous homolog 1 (1272 aa).

An N-acetylmethionine modification is found at Met-1. Residues 1-12 (MEPPGGSLGPGR) are compositionally biased toward gly residues. A disordered region spans residues 1-84 (MEPPGGSLGP…YGDDPTAQSL (84 aa)). 3 positions are modified to phosphoserine: Ser-7, Ser-22, and Ser-36. Basic and acidic residues predominate over residues 44–65 (LMADELERFTSMRIKKEKEKPN). The segment covering 67–84 (AHRNSSASYGDDPTAQSL) has biased composition (polar residues). The GBD/FH3 domain occupies 84 to 449 (LQDVSDEQVL…QIVLHKNGAD (366 aa)). Residues 468–572 (MIDKTKVEKS…ASLSAAAITV (105 aa)) are a coiled coil. A disordered region spans residues 573 to 755 (PPSVPSRAPV…GMPPPPPFGF (183 aa)). 3 stretches are compositionally biased toward pro residues: residues 574-589 (PSVP…PPLP), 596-622 (IPPP…PPLP), and 640-658 (SPPP…PPLP). The FH1 domain maps to 583 to 764 (PPAPPLPGDS…FGVPAAPVLP (182 aa)). Over residues 659-674 (EGVGIPSPSSLPGGTA) the composition is skewed to low complexity. A compositionally biased stretch (pro residues) spans 675-753 (IPPPPPLPGS…GMGMPPPPPF (79 aa)). A Phosphothreonine modification is found at Thr-768. Positions 769 to 1171 (PKKLYKPEVQ…MRRAKLAKEK (403 aa)) constitute an FH2 domain. Residues 1039–1196 (DELAHVEKAS…IDMNAEGDET (158 aa)) adopt a coiled-coil conformation. N6-acetyllysine is present on residues Lys-1057 and Lys-1103. Tyr-1121 is subject to Phosphotyrosine. In terms of domain architecture, DAD spans 1194–1222 (DETGVMDSLLEALQSGAAFRRKRGPRQAN). A phosphoserine mark is found at Ser-1251 and Ser-1254.

Belongs to the formin homology family. Diaphanous subfamily. As to quaternary structure, homodimer. Interacts with the GTP-bound form of RHOA. Interacts with RHOC, PFY1, MAPRE1 and BAIAP2. Interacts with APC; acts as a scaffold protein for MAPRE1 and APC to stabilize microtubules and promote cell migration. Interacts with SCAI. Interacts with DCAF7, via FH2 domain. Interacts with NCDN. Interacts with OSBPL10, OSBPL2, VIM, TUBB and DYN1. Phosphorylation at Thr-768 is stimulated by cAMP and regulates stability, complex formation and mitochondrial movement. Expressed in brain, heart, placenta, lung, kidney, pancreas, liver, skeletal muscle and cochlea. Expressed in platelets.

It is found in the cell membrane. The protein resides in the cell projection. The protein localises to the ruffle membrane. Its subcellular location is the cytoplasm. It localises to the cytoskeleton. It is found in the microtubule organizing center. The protein resides in the centrosome. The protein localises to the spindle. Its subcellular location is the nucleus. In terms of biological role, actin nucleation and elongation factor required for the assembly of F-actin structures, such as actin cables and stress fibers. Binds to the barbed end of the actin filament and slows down actin polymerization and depolymerization. Required for cytokinesis, and transcriptional activation of the serum response factor. DFR proteins couple Rho and Src tyrosine kinase during signaling and the regulation of actin dynamics. Functions as a scaffold protein for MAPRE1 and APC to stabilize microtubules and promote cell migration. Has neurite outgrowth promoting activity. Acts in a Rho-dependent manner to recruit PFY1 to the membrane. In hear cells, it may play a role in the regulation of actin polymerization in hair cells. The MEMO1-RHOA-DIAPH1 signaling pathway plays an important role in ERBB2-dependent stabilization of microtubules at the cell cortex. It controls the localization of APC and CLASP2 to the cell membrane, via the regulation of GSK3B activity. In turn, membrane-bound APC allows the localization of the MACF1 to the cell membrane, which is required for microtubule capture and stabilization. Plays a role in the regulation of cell morphology and cytoskeletal organization. Required in the control of cell shape. Plays a role in brain development. Also acts as an actin nucleation and elongation factor in the nucleus by promoting nuclear actin polymerization inside the nucleus to drive serum-dependent SRF-MRTFA activity. This chain is Protein diaphanous homolog 1 (DIAPH1), found in Homo sapiens (Human).